The sequence spans 143 residues: Protein SLC31A2 (143 aa).

At 1 to 22 (MAMHFIFSDTAVLLFDFWSVHS) the chain is on the extracellular side. The helical transmembrane segment at 23–43 (PAGMALSVLVLLLLAVLYEGI) threads the bilayer. Residues 44-93 (KVGKAKLLNQVLVNLPTSISQQTIAETDGDSAGSDSFPVGRTHHRWYLCH) are Cytoplasmic-facing. At Ser77 the chain carries Phosphoserine. The chain crosses the membrane as a helical span at residues 94–114 (FGQSLIHVIQVVIGYFIMLAV). At 115–119 (MSYNT) the chain is on the extracellular side. The chain crosses the membrane as a helical span at residues 120–140 (WIFLGVVLGSAVGYYLAYPLL). The Cytoplasmic segment spans residues 141–143 (STA).

This sequence belongs to the copper transporter (Ctr) (TC 1.A.56) family. SLC31A subfamily. Oligomer. Interacts with SLC31A1; this interaction stabilizes SLC31A2 and protects it from ubiquitination and the subsequent degradation. Post-translationally, ubiquitinated; ubiquitination and the subsequent proteasomal degradation are prevent by SLC31A1 that stabilizes it. As to expression, ubiquitous with high expression in placenta and heart.

It is found in the membrane. It localises to the cytoplasmic vesicle membrane. Its subcellular location is the late endosome membrane. The protein localises to the lysosome membrane. Functionally, does not function as a copper(1+) importer in vivo. However, in vitro functions as a low-affinity copper(1+) importer. Regulator of SLC31A1 which facilitates the cleavage of the SLC31A1 ecto-domain or which stabilizes the truncated form of SLC31A1 (Truncated CTR1 form), thereby drives the SLC31A1 truncated form-dependent endosomal copper export and modulates the copper and cisplatin accumulation via SLC31A1. The protein is Protein SLC31A2 of Homo sapiens (Human).